The chain runs to 398 residues: Serine/threonine-protein kinase 32A (398 aa).

Glycine 2 carries N-myristoyl glycine lipidation. The Protein kinase domain maps to 23–281 (FEILRAIGKG…LTDIQNFPYM (259 aa)). ATP contacts are provided by residues 29-37 (IGKGSFGKV) and lysine 52. Residue aspartate 146 is the Proton acceptor of the active site. Positions 379–398 (ALEQTKNNTEEEEDGQNNNL) are disordered. Positions 388–398 (EEEEDGQNNNL) are enriched in acidic residues.

This sequence belongs to the protein kinase superfamily. Ser/Thr protein kinase family. Mg(2+) serves as cofactor.

It is found in the cell membrane. The enzyme catalyses L-seryl-[protein] + ATP = O-phospho-L-seryl-[protein] + ADP + H(+). It catalyses the reaction L-threonyl-[protein] + ATP = O-phospho-L-threonyl-[protein] + ADP + H(+). The sequence is that of Serine/threonine-protein kinase 32A from Mus musculus (Mouse).